Reading from the N-terminus, the 158-residue chain is 6,7-dimethyl-8-ribityllumazine synthase (158 aa).

5-amino-6-(D-ribitylamino)uracil contacts are provided by residues phenylalanine 22, 57-59 (AVE), and 81-83 (AVI). Position 86 to 87 (86 to 87 (GT)) interacts with (2S)-2-hydroxy-3-oxobutyl phosphate. Histidine 89 serves as the catalytic Proton donor. A 5-amino-6-(D-ribitylamino)uracil-binding site is contributed by phenylalanine 114. Residue arginine 128 coordinates (2S)-2-hydroxy-3-oxobutyl phosphate.

This sequence belongs to the DMRL synthase family. Forms an icosahedral capsid composed of 60 subunits, arranged as a dodecamer of pentamers.

The enzyme catalyses (2S)-2-hydroxy-3-oxobutyl phosphate + 5-amino-6-(D-ribitylamino)uracil = 6,7-dimethyl-8-(1-D-ribityl)lumazine + phosphate + 2 H2O + H(+). It functions in the pathway cofactor biosynthesis; riboflavin biosynthesis; riboflavin from 2-hydroxy-3-oxobutyl phosphate and 5-amino-6-(D-ribitylamino)uracil: step 1/2. Catalyzes the formation of 6,7-dimethyl-8-ribityllumazine by condensation of 5-amino-6-(D-ribitylamino)uracil with 3,4-dihydroxy-2-butanone 4-phosphate. This is the penultimate step in the biosynthesis of riboflavin. In Shewanella frigidimarina (strain NCIMB 400), this protein is 6,7-dimethyl-8-ribityllumazine synthase.